A 257-amino-acid polypeptide reads, in one-letter code: Adenosylcobinamide-GDP ribazoletransferase (257 aa).

Transmembrane regions (helical) follow at residues 28 to 48, 50 to 70, 110 to 130, and 199 to 219; these read FARSPWTFPVVGYLVGGLVAL, LFVPAPAPTVALAFVLAVYAV, VALALVVLGLATAALGLVEVA, and WPQVLPGLAALLVALATAALV.

The protein belongs to the CobS family. Mg(2+) serves as cofactor.

It localises to the cell membrane. It carries out the reaction alpha-ribazole + adenosylcob(III)inamide-GDP = adenosylcob(III)alamin + GMP + H(+). The catalysed reaction is alpha-ribazole 5'-phosphate + adenosylcob(III)inamide-GDP = adenosylcob(III)alamin 5'-phosphate + GMP + H(+). Its pathway is cofactor biosynthesis; adenosylcobalamin biosynthesis; adenosylcobalamin from cob(II)yrinate a,c-diamide: step 7/7. Its function is as follows. Joins adenosylcobinamide-GDP and alpha-ribazole to generate adenosylcobalamin (Ado-cobalamin). Also synthesizes adenosylcobalamin 5'-phosphate from adenosylcobinamide-GDP and alpha-ribazole 5'-phosphate. The chain is Adenosylcobinamide-GDP ribazoletransferase from Halorubrum lacusprofundi (strain ATCC 49239 / DSM 5036 / JCM 8891 / ACAM 34).